Reading from the N-terminus, the 155-residue chain is Egg-lysin (155 aa).

Residues 1–18 (MKLLVLCLFAMMATLAVS) form the signal peptide.

Monomer. Homodimer. Molecules associate into dimers and then rapidly dissociate again. Interacts (as a monomer) with the egg vitelline layer protein VERL (via VERL repeats); each VERL chain can bind multiple copies of lysin. As to expression, sperm (at protein level).

The protein resides in the cytoplasmic vesicle. It localises to the secretory vesicle. Its subcellular location is the acrosome lumen. In terms of biological role, creates a 3 um hole in the egg vitelline layer through which the sperm passes. Does not have enzyme activity. Species-specific interaction between the sperm protein lysin and the egg protein VERL exposes a basic surface on lysin that may dissociate the egg vitelline layer via electrostatic repulsion. Plays a role in ensuring species-specific fertilization. This is Egg-lysin from Haliotis corrugata (Pink abalone).